The primary structure comprises 507 residues: AMP phosphorylase (507 aa).

AMP contacts are provided by residues Gly-168, 194 to 199 (SRAITG), and Thr-203. Residue Asp-256 is the Proton donor of the active site. AMP is bound by residues Ser-264 and Lys-288.

It belongs to the thymidine/pyrimidine-nucleoside phosphorylase family. Type 2 subfamily.

The catalysed reaction is AMP + phosphate = alpha-D-ribose 1,5-bisphosphate + adenine. It carries out the reaction CMP + phosphate = cytosine + alpha-D-ribose 1,5-bisphosphate. The enzyme catalyses UMP + phosphate = alpha-D-ribose 1,5-bisphosphate + uracil. Functionally, catalyzes the conversion of AMP and phosphate to adenine and ribose 1,5-bisphosphate (R15P). Exhibits phosphorylase activity toward CMP and UMP in addition to AMP. Functions in an archaeal AMP degradation pathway, together with R15P isomerase and RubisCO. The sequence is that of AMP phosphorylase from Methanosarcina mazei (strain ATCC BAA-159 / DSM 3647 / Goe1 / Go1 / JCM 11833 / OCM 88) (Methanosarcina frisia).